Consider the following 558-residue polypeptide: Potassium-transporting ATPase potassium-binding subunit (558 aa).

A run of 11 helical transmembrane segments spans residues 1 to 21, 59 to 79, 85 to 105, 130 to 150, 179 to 199, 245 to 265, 279 to 299, 374 to 394, 416 to 436, 484 to 504, and 527 to 547; these read MDTL…VLIH, PAYL…VYGL, FLPY…NTAV, GLAV…IALV, LSLV…FAGF, PTAW…FSLP, TAIV…LTIF, GLYG…LLVG, ILVT…IPAV, ALGV…LALA, and FVGL…FPVL.

The protein belongs to the KdpA family. The system is composed of three essential subunits: KdpA, KdpB and KdpC.

Its subcellular location is the cell membrane. Part of the high-affinity ATP-driven potassium transport (or Kdp) system, which catalyzes the hydrolysis of ATP coupled with the electrogenic transport of potassium into the cytoplasm. This subunit binds the extracellular potassium ions and delivers the ions to the membrane domain of KdpB through an intramembrane tunnel. The sequence is that of Potassium-transporting ATPase potassium-binding subunit from Clavibacter michiganensis subsp. michiganensis (strain NCPPB 382).